The primary structure comprises 1600 residues: THO complex subunit 2 (1600 aa).

Positions 1-163 (MAAAAVVVPA…KLFYKQQKFN (163 aa)) are anchor domain; interaction with THOC5 and THOC7. The tract at residues 164–534 (LLREENEGYA…GQWKNETYNS (371 aa)) is bow domain; interaction with THOC1 dock domain and THOC3. The stretch at 293–339 (NCIMDEHKREIAEAKQIVRKLTMVVLSSEKMDDREKEKEKEEEKVEK) forms a coiled coil. A disordered region spans residues 321 to 341 (EKMDDREKEKEKEEEKVEKPP). The interval 535–686 (HPLLVKVKAQ…LILKEVVQKM (152 aa)) is MIF4G domain; interaction with THOC3 and DDX39B. The segment at 687–1174 (AGIEITEEMT…LAMGYSGQLK (488 aa)) is stern domain. A coiled-coil region spans residues 896–965 (HTSYEREVNK…LKLEKDNWLL (70 aa)). The Nuclear localization signal motif lies at 923–928 (KKKKEK). Residues 1175-1597 (SRKSYMIPEN…FHLDVFSQYN (423 aa)) are charged domain. The tract at residues 1184-1600 (NEFHHKDPSP…DVFSQYNGKL (417 aa)) is disordered. Low complexity predominate over residues 1208–1217 (PSPSSTGSTS). Residues 1218–1234 (KSDESSAEETDKSRERS) are compositionally biased toward basic and acidic residues. Position 1222 is a phosphoserine (S1222). A compositionally biased stretch (low complexity) spans 1251 to 1263 (GNSSNGNSGSNSN). Basic and acidic residues-rich tracts occupy residues 1265-1285 (AVKE…KEKT), 1294-1343 (ILGK…EKFK), and 1353-1383 (SSQE…KGGE). T1385 carries the post-translational modification Phosphothreonine. Phosphoserine is present on residues S1390, S1393, and S1417. The span at 1416-1425 (PSPSHSSTVK) shows a compositional bias: polar residues. Residue T1443 is modified to Phosphothreonine. Residues 1449–1504 (KSKEREMDKKDLDKSRERSREREKKDEKDRKERKRDHSNSDREVPPDLTKRRKEEN) are compositionally biased toward basic and acidic residues. Phosphoserine is present on residues S1450, S1486, and S1516. The stretch at 1464–1491 (RERSREREKKDEKDRKERKRDHSNSDRE) forms a coiled coil. Basic and acidic residues predominate over residues 1524-1585 (NEKDKEKNKS…SSGGKEEKKQ (62 aa)).

This sequence belongs to the THOC2 family. Component of the THO subcomplex, which is composed of THOC1, THOC2, THOC3, THOC5, THOC6 and THOC7. The THO subcomplex interacts with DDX39B to form the THO-DDX39B complex which multimerizes into a 28-subunit tetrameric assembly. Component of the transcription/export (TREX) complex at least composed of ALYREF/THOC4, DDX39B, SARNP/CIP29, CHTOP and the THO subcomplex; in the complex interacts with THOC1, THOC3, THOC5, THOC7 and DDX39B. TREX seems to have a dynamic structure involving ATP-dependent remodeling. Interacts with POLDIP3 and ZC3H11A.

The protein resides in the nucleus. The protein localises to the nucleus speckle. It is found in the cytoplasm. In terms of biological role, component of the THO subcomplex of the TREX complex which is thought to couple mRNA transcription, processing and nuclear export, and which specifically associates with spliced mRNA and not with unspliced pre-mRNA. Required for efficient export of polyadenylated RNA and spliced mRNA. The THOC1-THOC2-THOC3 core complex alone is sufficient to bind export factor NXF1-NXT1 and promote ATPase activity of DDX39B; in the complex THOC2 is the only component that directly interacts with DDX39B. TREX is recruited to spliced mRNAs by a transcription-independent mechanism, binds to mRNA upstream of the exon-junction complex (EJC) and is recruited in a splicing- and cap-dependent manner to a region near the 5' end of the mRNA where it functions in mRNA export to the cytoplasm via the TAP/NXF1 pathway. Required for NXF1 localization to the nuclear rim. THOC2 (and probably the THO complex) is involved in releasing mRNA from nuclear speckle domains. Plays a role for proper neuronal development. The sequence is that of THO complex subunit 2 (THOC2) from Plecturocebus moloch (Dusky titi monkey).